The chain runs to 390 residues: Cell division protein FtsZ (390 aa).

Residues 21-25, 108-110, Glu139, Arg143, and Asp187 each bind GTP; these read GGGNN and GTG. Residues 315–390 are disordered; it reads FDDKPTSHGR…EERRSRRTRR (76 aa). The span at 326-360 shows a compositional bias: polar residues; sequence SGSTGFGTSVNTSSNATSKDESFTSNSSNAQATDS. The span at 361 to 384 shows a compositional bias: basic and acidic residues; that stretch reads VSERTHTTKEDDIPSFIRNREERR.

This sequence belongs to the FtsZ family. In terms of assembly, homodimer. Polymerizes to form a dynamic ring structure in a strictly GTP-dependent manner. Interacts directly with several other division proteins.

It localises to the cytoplasm. Functionally, essential cell division protein that forms a contractile ring structure (Z ring) at the future cell division site. The regulation of the ring assembly controls the timing and the location of cell division. One of the functions of the FtsZ ring is to recruit other cell division proteins to the septum to produce a new cell wall between the dividing cells. Binds GTP and shows GTPase activity. This chain is Cell division protein FtsZ, found in Staphylococcus aureus (strain NCTC 8325 / PS 47).